The following is a 428-amino-acid chain: Enolase 2 (428 aa).

Position 162 (glutamine 162) interacts with (2R)-2-phosphoglycerate. The active-site Proton donor is the glutamate 204. Residues aspartate 241, glutamate 285, and aspartate 312 each coordinate Mg(2+). 4 residues coordinate (2R)-2-phosphoglycerate: lysine 337, arginine 366, serine 367, and lysine 388. Lysine 337 functions as the Proton acceptor in the catalytic mechanism.

The protein belongs to the enolase family. Requires Mg(2+) as cofactor.

It localises to the cytoplasm. The protein resides in the secreted. It is found in the cell surface. It catalyses the reaction (2R)-2-phosphoglycerate = phosphoenolpyruvate + H2O. It functions in the pathway carbohydrate degradation; glycolysis; pyruvate from D-glyceraldehyde 3-phosphate: step 4/5. Functionally, catalyzes the reversible conversion of 2-phosphoglycerate (2-PG) into phosphoenolpyruvate (PEP). It is essential for the degradation of carbohydrates via glycolysis. The polypeptide is Enolase 2 (Lactobacillus johnsonii (strain CNCM I-12250 / La1 / NCC 533)).